The primary structure comprises 240 residues: ATP-dependent dethiobiotin synthetase BioD (240 aa).

15-20 (EIGKTF) lines the ATP pocket. Mg(2+) is bound at residue threonine 19. Residue lysine 40 is part of the active site. ATP-binding positions include aspartate 57, 118–121 (EGVG), and 178–179 (NR). Aspartate 57 and glutamate 118 together coordinate Mg(2+).

It belongs to the dethiobiotin synthetase family. Homodimer. It depends on Mg(2+) as a cofactor.

Its subcellular location is the cytoplasm. It catalyses the reaction (7R,8S)-7,8-diammoniononanoate + CO2 + ATP = (4R,5S)-dethiobiotin + ADP + phosphate + 3 H(+). Its pathway is cofactor biosynthesis; biotin biosynthesis; biotin from 7,8-diaminononanoate: step 1/2. Its function is as follows. Catalyzes a mechanistically unusual reaction, the ATP-dependent insertion of CO2 between the N7 and N8 nitrogen atoms of 7,8-diaminopelargonic acid (DAPA, also called 7,8-diammoniononanoate) to form a ureido ring. The sequence is that of ATP-dependent dethiobiotin synthetase BioD from Burkholderia thailandensis (strain ATCC 700388 / DSM 13276 / CCUG 48851 / CIP 106301 / E264).